A 97-amino-acid chain; its full sequence is Sperm protein associated with the nucleus on the X chromosome A (97 aa).

The disordered stretch occupies residues 1 to 49 (MDKQSSAGGVKRSVPCDSNEANEMMPETPTGDSDPQPAPKKMKTSESST). Residues 37-45 (PAPKKMKTS) carry the Nuclear localization signal motif.

It belongs to the SPAN-X family. In terms of tissue distribution, detected in testis and sperm.

It localises to the cytoplasm. The protein resides in the nucleus. This Homo sapiens (Human) protein is Sperm protein associated with the nucleus on the X chromosome A.